The chain runs to 199 residues: Ciliary neurotrophic factor (199 aa).

It belongs to the CNTF family. Nervous system.

The protein localises to the cytoplasm. CNTF is a survival factor for various neuronal cell types. Seems to prevent the degeneration of motor axons after axotomy. The chain is Ciliary neurotrophic factor (CNTF) from Oryctolagus cuniculus (Rabbit).